A 286-amino-acid polypeptide reads, in one-letter code: Energy-coupling factor transporter ATP-binding protein EcfA2 (286 aa).

An ABC transporter domain is found at 3-246; it reads IQFNQVSYIY…KTQLLKWHIE (244 aa). 40 to 47 is an ATP binding site; the sequence is GQTGSGKS.

The protein belongs to the ABC transporter superfamily. Energy-coupling factor EcfA family. Forms a stable energy-coupling factor (ECF) transporter complex composed of 2 membrane-embedded substrate-binding proteins (S component), 2 ATP-binding proteins (A component) and 2 transmembrane proteins (T component).

It is found in the cell membrane. In terms of biological role, ATP-binding (A) component of a common energy-coupling factor (ECF) ABC-transporter complex. Unlike classic ABC transporters this ECF transporter provides the energy necessary to transport a number of different substrates. In Staphylococcus epidermidis (strain ATCC 35984 / DSM 28319 / BCRC 17069 / CCUG 31568 / BM 3577 / RP62A), this protein is Energy-coupling factor transporter ATP-binding protein EcfA2.